A 494-amino-acid polypeptide reads, in one-letter code: Aspartyl/glutamyl-tRNA(Asn/Gln) amidotransferase subunit B (494 aa).

Belongs to the GatB/GatE family. GatB subfamily. In terms of assembly, heterotrimer of A, B and C subunits.

The enzyme catalyses L-glutamyl-tRNA(Gln) + L-glutamine + ATP + H2O = L-glutaminyl-tRNA(Gln) + L-glutamate + ADP + phosphate + H(+). It carries out the reaction L-aspartyl-tRNA(Asn) + L-glutamine + ATP + H2O = L-asparaginyl-tRNA(Asn) + L-glutamate + ADP + phosphate + 2 H(+). Allows the formation of correctly charged Asn-tRNA(Asn) or Gln-tRNA(Gln) through the transamidation of misacylated Asp-tRNA(Asn) or Glu-tRNA(Gln) in organisms which lack either or both of asparaginyl-tRNA or glutaminyl-tRNA synthetases. The reaction takes place in the presence of glutamine and ATP through an activated phospho-Asp-tRNA(Asn) or phospho-Glu-tRNA(Gln). This Synechococcus sp. (strain WH7803) protein is Aspartyl/glutamyl-tRNA(Asn/Gln) amidotransferase subunit B.